A 151-amino-acid polypeptide reads, in one-letter code: Putative phosphatidylglycerol/phosphatidylinositol transfer protein 1 (151 aa).

An N-terminal signal peptide occupies residues 1–26 (MKHSKNQIVYITFFIIILIVVKPIES).

It belongs to the NPC2 family. As to quaternary structure, monomer.

Its function is as follows. Catalyzes the intermembrane transfer of phosphatidylglycerol and phosphatidylinositol. The chain is Putative phosphatidylglycerol/phosphatidylinositol transfer protein 1 from Dictyostelium discoideum (Social amoeba).